A 159-amino-acid chain; its full sequence is Ribosome maturation factor RimP (159 aa).

It belongs to the RimP family.

It is found in the cytoplasm. Its function is as follows. Required for maturation of 30S ribosomal subunits. The sequence is that of Ribosome maturation factor RimP from Bordetella avium (strain 197N).